A 256-amino-acid polypeptide reads, in one-letter code: Thiazole synthase (256 aa).

The active-site Schiff-base intermediate with DXP is Lys-96. Residues Gly-157, 184–185, and 206–207 each bind 1-deoxy-D-xylulose 5-phosphate; these read AG and NT.

It belongs to the ThiG family. As to quaternary structure, homotetramer. Forms heterodimers with either ThiH or ThiS.

The protein resides in the cytoplasm. It catalyses the reaction [ThiS sulfur-carrier protein]-C-terminal-Gly-aminoethanethioate + 2-iminoacetate + 1-deoxy-D-xylulose 5-phosphate = [ThiS sulfur-carrier protein]-C-terminal Gly-Gly + 2-[(2R,5Z)-2-carboxy-4-methylthiazol-5(2H)-ylidene]ethyl phosphate + 2 H2O + H(+). It participates in cofactor biosynthesis; thiamine diphosphate biosynthesis. Catalyzes the rearrangement of 1-deoxy-D-xylulose 5-phosphate (DXP) to produce the thiazole phosphate moiety of thiamine. Sulfur is provided by the thiocarboxylate moiety of the carrier protein ThiS. In vitro, sulfur can be provided by H(2)S. This Brucella suis (strain ATCC 23445 / NCTC 10510) protein is Thiazole synthase.